The primary structure comprises 369 residues: 4-hydroxy-3-methylbut-2-en-1-yl diphosphate synthase (flavodoxin) (369 aa).

4 residues coordinate [4Fe-4S] cluster: cysteine 270, cysteine 273, cysteine 305, and glutamate 312.

The protein belongs to the IspG family. [4Fe-4S] cluster is required as a cofactor.

The enzyme catalyses (2E)-4-hydroxy-3-methylbut-2-enyl diphosphate + oxidized [flavodoxin] + H2O + 2 H(+) = 2-C-methyl-D-erythritol 2,4-cyclic diphosphate + reduced [flavodoxin]. The protein operates within isoprenoid biosynthesis; isopentenyl diphosphate biosynthesis via DXP pathway; isopentenyl diphosphate from 1-deoxy-D-xylulose 5-phosphate: step 5/6. Its function is as follows. Converts 2C-methyl-D-erythritol 2,4-cyclodiphosphate (ME-2,4cPP) into 1-hydroxy-2-methyl-2-(E)-butenyl 4-diphosphate. The protein is 4-hydroxy-3-methylbut-2-en-1-yl diphosphate synthase (flavodoxin) of Pseudomonas fluorescens (strain SBW25).